The chain runs to 488 residues: Probable phenylalanine--tRNA ligase alpha subunit (488 aa).

Residues 1-146 (MSIEQDILNL…KRKLVDINKK (146 aa)) form a contains the major tRNA-Phe binding sites region. Residues Thr315, 363-365 (QVE), and Tyr403 each bind L-phenylalanine. Glu405 serves as a coordination point for Mg(2+). Phe429 provides a ligand contact to L-phenylalanine.

Belongs to the class-II aminoacyl-tRNA synthetase family. Phe-tRNA synthetase alpha subunit type 2 subfamily. Tetramer of two alpha and two beta subunits. The cofactor is Mg(2+).

It is found in the cytoplasm. The catalysed reaction is tRNA(Phe) + L-phenylalanine + ATP = L-phenylalanyl-tRNA(Phe) + AMP + diphosphate + H(+). This chain is Probable phenylalanine--tRNA ligase alpha subunit, found in Enterocytozoon bieneusi (strain H348) (Microsporidian parasite).